The primary structure comprises 114 residues: Cuticle protein CP1158 (114 aa).

Glutamine 1 is subject to Pyrrolidone carboxylic acid. 4 consecutive repeat copies span residues 1–17 (QVGY…NIQF), 26–43 (VLKG…NLQL), 70–87 (SVVG…VQFS), and 95–112 (VLVG…NLQL).

In terms of tissue distribution, calcified shell.

The protein is Cuticle protein CP1158 of Cancer pagurus (Rock crab).